The following is a 269-amino-acid chain: Formamidopyrimidine-DNA glycosylase (269 aa).

The active-site Schiff-base intermediate with DNA is proline 2. The Proton donor role is filled by glutamate 3. Lysine 57 (proton donor; for beta-elimination activity) is an active-site residue. The DNA site is built by histidine 90, arginine 109, and arginine 150. The FPG-type zinc finger occupies 235-269; the sequence is NVYGRKGEPCEACGKAIESKVIGQRNTFFCTRCQR. Residue arginine 259 is the Proton donor; for delta-elimination activity of the active site.

This sequence belongs to the FPG family. In terms of assembly, monomer. Requires Zn(2+) as cofactor.

It carries out the reaction Hydrolysis of DNA containing ring-opened 7-methylguanine residues, releasing 2,6-diamino-4-hydroxy-5-(N-methyl)formamidopyrimidine.. It catalyses the reaction 2'-deoxyribonucleotide-(2'-deoxyribose 5'-phosphate)-2'-deoxyribonucleotide-DNA = a 3'-end 2'-deoxyribonucleotide-(2,3-dehydro-2,3-deoxyribose 5'-phosphate)-DNA + a 5'-end 5'-phospho-2'-deoxyribonucleoside-DNA + H(+). Functionally, involved in base excision repair of DNA damaged by oxidation or by mutagenic agents. Acts as a DNA glycosylase that recognizes and removes damaged bases. Has a preference for oxidized purines, such as 7,8-dihydro-8-oxoguanine (8-oxoG). Has AP (apurinic/apyrimidinic) lyase activity and introduces nicks in the DNA strand. Cleaves the DNA backbone by beta-delta elimination to generate a single-strand break at the site of the removed base with both 3'- and 5'-phosphates. The chain is Formamidopyrimidine-DNA glycosylase from Alteromonas mediterranea (strain DSM 17117 / CIP 110805 / LMG 28347 / Deep ecotype).